Consider the following 538-residue polypeptide: MGLLLLVLILTPLLAAYRHPDFPLLEKAQQLLQSTGSPYSTNCWLCTSSSTETPGTAYPASPREWTSIEAELHISYQWDPNLKGLMRPANSLLSTVKQDFPDIRQKPPIFGPIFTNINLMGIAPICVTAKRKNGTNVGTLPSTVCNVTFTVDPNQQTYQTYTHNQFRHQPRFPKPPNITFPQGTLLDKSTRFCQGRPSSCSTRNFWFRPADYNQCLQISNLSSTAEWVLLDQTRNSLFWENKTKGANQSQTPCVQVLAGMTIATSYLGISAVSEFFGNSLTPLFHFHISTCLKTQGAFYICGQSIHQCLPSNWTGTCTIGYVTPDIFIAPGNLSLPIPIYGKSQLPRVRRAIHFIPLLAGLGILAGTGTGIAGITKASLTYSQLSKEIANNIDTMAKTLTTVQEQIDSLAAVVLQNRRGLDMLTAAQGGICLALDEKCCFWVNQSGKVQDNIRQLLNQASSLRERATQGWLNWEGTWKWFSWVLPFIGPFVSLLLLLLFGPCLLNLITQFVSSRLQAIKLQTNLSAGRRPRTIQESPF.

The signal sequence occupies residues 1-15 (MGLLLLVLILTPLLA). Over 31–478 (LLQSTGSPYS…GWLNWEGTWK (448 aa)) the chain is Extracellular. The CXXC motif lies at 43 to 46 (CWLC). Intrachain disulfides connect Cys43/Cys46, Cys43/Cys439, and Cys431/Cys438. 8 N-linked (GlcNAc...) asparagine glycosylation sites follow: Asn133, Asn146, Asn177, Asn220, Asn241, Asn247, Asn312, and Asn332. The fusion peptide stretch occupies residues 354–374 (FIPLLAGLGILAGTGTGIAGI). A CKS-17 motif is present at residues 414–430 (LQNRRGLDMLTAAQGGI). The CX6CC motif lies at 431-439 (CLALDEKCC). The N-linked (GlcNAc...) asparagine glycan is linked to Asn443. The chain crosses the membrane as a helical span at residues 479 to 499 (WFSWVLPFIGPFVSLLLLLLF). Residues 500-538 (GPCLLNLITQFVSSRLQAIKLQTNLSAGRRPRTIQESPF) lie on the Cytoplasmic side of the membrane.

It belongs to the gamma type-C retroviral envelope protein family. HERV class-I FRD env subfamily. As to quaternary structure, the surface and transmembrane proteins form a heterodimer. They are attached by non-covalent interactions or by a labile interchain disulfide bond. In terms of processing, specific enzymatic cleavages in vivo yield the mature SU and TM proteins. Post-translationally, the CXXC motif is highly conserved across a broad range of retroviral envelope proteins. It is thought to participate in the formation of a labile disulfide bond possibly with the CX6CC motif present in the transmembrane protein.

The protein resides in the cell membrane. Functionally, this endogenous retroviral envelope protein has retained its original fusogenic properties and participates in trophoblast fusion and the formation of a syncytium during placenta morphogenesis. The interaction with MFSD2A is apparently important for this process. In terms of biological role, endogenous envelope proteins may have kept, lost or modified their original function during evolution and this one is unable to confer infectivity. The chain is Syncytin-2 (ERVFRD-1) from Hylobates moloch (Silvery gibbon).